The chain runs to 574 residues: 3-hydroxy-3-methylglutaryl-coenzyme A reductase 3 (574 aa).

Residues 1 to 30 (MDVRRRPVKPLYPSEHISSGEPLKPHNQDS) are disordered. A helical membrane pass occupies residues 41-61 (PLYLTNGLFFTMFFSVMYFLL). N78 carries N-linked (GlcNAc...) asparagine glycosylation. Residues 83–103 (VAMVSLIASVIYLLGFFGIGF) form a helical membrane-spanning segment. The segment at 104–161 (VQSFVSKGNNDSWDVEDESPEQFIDRTVTPPPVRRNIPMKSVPVAEKTAQIITPFSSE) is linker. An N-linked (GlcNAc...) asparagine glycan is attached at N113. Positions 162–574 (DDEVVIKSVV…YNRSCKDVTK (413 aa)) are catalytic. E256 functions as the Charge relay system in the catalytic mechanism. N320 carries an N-linked (GlcNAc...) asparagine glycan. The Charge relay system role is filled by K388. A glycan (N-linked (GlcNAc...) asparagine) is linked at N433. The active-site Charge relay system is the D464. Residue H562 is the Proton donor of the active site. A glycan (N-linked (GlcNAc...) asparagine) is linked at N566.

This sequence belongs to the HMG-CoA reductase family. In terms of tissue distribution, expressed in mature petals and anthers.

It localises to the endoplasmic reticulum membrane. It carries out the reaction (R)-mevalonate + 2 NADP(+) + CoA = (3S)-3-hydroxy-3-methylglutaryl-CoA + 2 NADPH + 2 H(+). It functions in the pathway metabolic intermediate biosynthesis; (R)-mevalonate biosynthesis; (R)-mevalonate from acetyl-CoA: step 3/3. Functionally, catalyzes the synthesis of mevalonate. The specific precursor of all isoprenoid compounds present in plants. This Solanum tuberosum (Potato) protein is 3-hydroxy-3-methylglutaryl-coenzyme A reductase 3 (HMG3).